Reading from the N-terminus, the 571-residue chain is Proline--tRNA ligase 1 (571 aa).

This sequence belongs to the class-II aminoacyl-tRNA synthetase family. ProS type 1 subfamily. Homodimer.

The protein localises to the cytoplasm. It catalyses the reaction tRNA(Pro) + L-proline + ATP = L-prolyl-tRNA(Pro) + AMP + diphosphate. In terms of biological role, catalyzes the attachment of proline to tRNA(Pro) in a two-step reaction: proline is first activated by ATP to form Pro-AMP and then transferred to the acceptor end of tRNA(Pro). As ProRS can inadvertently accommodate and process non-cognate amino acids such as alanine and cysteine, to avoid such errors it has two additional distinct editing activities against alanine. One activity is designated as 'pretransfer' editing and involves the tRNA(Pro)-independent hydrolysis of activated Ala-AMP. The other activity is designated 'posttransfer' editing and involves deacylation of mischarged Ala-tRNA(Pro). The misacylated Cys-tRNA(Pro) is not edited by ProRS. The chain is Proline--tRNA ligase 1 from Clostridioides difficile (strain 630) (Peptoclostridium difficile).